The following is a 175-amino-acid chain: Large ribosomal subunit protein uL10 (175 aa).

Belongs to the universal ribosomal protein uL10 family. As to quaternary structure, part of the ribosomal stalk of the 50S ribosomal subunit. The N-terminus interacts with L11 and the large rRNA to form the base of the stalk. The C-terminus forms an elongated spine to which L12 dimers bind in a sequential fashion forming a multimeric L10(L12)X complex.

Functionally, forms part of the ribosomal stalk, playing a central role in the interaction of the ribosome with GTP-bound translation factors. The polypeptide is Large ribosomal subunit protein uL10 (Prochlorococcus marinus (strain SARG / CCMP1375 / SS120)).